Reading from the N-terminus, the 1755-residue chain is Transposon Ty1-LR2 Gag-Pol polyprotein (1755 aa).

3 stretches are compositionally biased toward polar residues: residues 1-23 (MESQ…SVTS), 48-60 (TKAN…TPAS), and 127-152 (QSQF…GNTF). 3 disordered regions span residues 1–93 (MESQ…MMTQ), 126–174 (PQSQ…PPPM), and 352–421 (GSRN…SKST). The segment covering 153–165 (TDSSSADSDMTST) has biased composition (low complexity). An RNA-binding region spans residues 299–401 (NNGIHINNKV…NSKSKTARAH (103 aa)). The segment covering 402 to 418 (NVSTSNNSPSTDNDSIS) has biased composition (low complexity). A Phosphoserine modification is found at Ser-416. The active-site For protease activity; shared with dimeric partner is Asp-461. An integrase-type zinc finger-like region spans residues 583–640 (NVHTSESTRKYPYPFIHRMLAHANAPTIRYSLKNNTITYFNESDVDWSSAIDYQCPDC). The Integrase catalytic domain maps to 660 to 835 (NSYEPFQYLH…AGLDISTLLP (176 aa)). 2 residues coordinate Mg(2+): Asp-671 and Asp-736. Disordered stretches follow at residues 956–1087 (SKAV…ETEK), 1092–1111 (RSPS…NIVP), and 1130–1187 (DLPL…DNET). Residues 960 to 969 (SPTDSTPPST) are compositionally biased toward low complexity. The segment covering 1005-1015 (STPQISNIEST) has biased composition (polar residues). Basic and acidic residues predominate over residues 1038–1053 (ESSHASKSKDFRHSDS). 2 stretches are compositionally biased toward polar residues: residues 1054-1082 (YSEN…QISD) and 1101-1111 (PENNSSHNIVP). Residues 1178 to 1212 (KKRSLEDNETEIKVSRDTWNTKNMRSLEPPRSKKR) carry the Bipartite nuclear localization signal motif. The 139-residue stretch at 1338–1476 (NNYYITQLDI…DILGLEIKYQ (139 aa)) folds into the Reverse transcriptase Ty1/copia-type domain. The Mg(2+) site is built by Asp-1346, Asp-1427, Asp-1428, Asp-1610, Glu-1652, and Asp-1685. Residues 1610–1752 (DASYGNQPYY…IKTFKLLTNK (143 aa)) enclose the RNase H Ty1/copia-type domain.

In terms of assembly, the capsid protein forms a homotrimer, from which the VLPs are assembled. The protease is a homodimer, whose active site consists of two apposed aspartic acid residues. In terms of processing, initially, virus-like particles (VLPs) are composed of the structural unprocessed proteins Gag and Gag-Pol, and also contain the host initiator methionine tRNA (tRNA(i)-Met) which serves as a primer for minus-strand DNA synthesis, and a dimer of genomic Ty RNA. Processing of the polyproteins occurs within the particle and proceeds by an ordered pathway, called maturation. First, the protease (PR) is released by autocatalytic cleavage of the Gag-Pol polyprotein yielding capsid protein p45 and a Pol-p154 precursor protein. This cleavage is a prerequisite for subsequent processing of Pol-p154 at the remaining sites to release the mature structural and catalytic proteins. Maturation takes place prior to the RT reaction and is required to produce transposition-competent VLPs.

It localises to the cytoplasm. It is found in the nucleus. It carries out the reaction DNA(n) + a 2'-deoxyribonucleoside 5'-triphosphate = DNA(n+1) + diphosphate. It catalyses the reaction Endonucleolytic cleavage to 5'-phosphomonoester.. In terms of biological role, capsid protein (CA) is the structural component of the virus-like particle (VLP), forming the shell that encapsulates the retrotransposons dimeric RNA genome. The particles are assembled from trimer-clustered units and there are holes in the capsid shells that allow for the diffusion of macromolecules. CA also has nucleocapsid-like chaperone activity, promoting primer tRNA(i)-Met annealing to the multipartite primer-binding site (PBS), dimerization of Ty1 RNA and initiation of reverse transcription. Its function is as follows. The aspartyl protease (PR) mediates the proteolytic cleavages of the Gag and Gag-Pol polyproteins after assembly of the VLP. Functionally, reverse transcriptase/ribonuclease H (RT) is a multifunctional enzyme that catalyzes the conversion of the retro-elements RNA genome into dsDNA within the VLP. The enzyme displays a DNA polymerase activity that can copy either DNA or RNA templates, and a ribonuclease H (RNase H) activity that cleaves the RNA strand of RNA-DNA heteroduplexes during plus-strand synthesis and hydrolyzes RNA primers. The conversion leads to a linear dsDNA copy of the retrotransposon that includes long terminal repeats (LTRs) at both ends. Integrase (IN) targets the VLP to the nucleus, where a subparticle preintegration complex (PIC) containing at least integrase and the newly synthesized dsDNA copy of the retrotransposon must transit the nuclear membrane. Once in the nucleus, integrase performs the integration of the dsDNA into the host genome. This chain is Transposon Ty1-LR2 Gag-Pol polyprotein (TY1B-LR2), found in Saccharomyces cerevisiae (strain ATCC 204508 / S288c) (Baker's yeast).